Here is a 176-residue protein sequence, read N- to C-terminus: MRVLGIDPGSRITGYGIVEQAGSRLIHVDNGAIFTDSALDFPGRLKSIFDGLTTVIAEYEPDEVAVENVFLSNNAQSALKLGQARGAAIVAAVHAGLPVAEYTALQVKQAVVGRGKAAKEQVQKMLTALLSLPEVAQADASDALAVAVCHLHSHHLVRTSASAVPHRATSWRNFKP.

Active-site residues include Asp7, Glu67, and Asp139. Mg(2+) is bound by residues Asp7, Glu67, and Asp139.

The protein belongs to the RuvC family. Homodimer which binds Holliday junction (HJ) DNA. The HJ becomes 2-fold symmetrical on binding to RuvC with unstacked arms; it has a different conformation from HJ DNA in complex with RuvA. In the full resolvosome a probable DNA-RuvA(4)-RuvB(12)-RuvC(2) complex forms which resolves the HJ. Mg(2+) serves as cofactor.

The protein resides in the cytoplasm. The enzyme catalyses Endonucleolytic cleavage at a junction such as a reciprocal single-stranded crossover between two homologous DNA duplexes (Holliday junction).. Functionally, the RuvA-RuvB-RuvC complex processes Holliday junction (HJ) DNA during genetic recombination and DNA repair. Endonuclease that resolves HJ intermediates. Cleaves cruciform DNA by making single-stranded nicks across the HJ at symmetrical positions within the homologous arms, yielding a 5'-phosphate and a 3'-hydroxyl group; requires a central core of homology in the junction. The consensus cleavage sequence is 5'-(A/T)TT(C/G)-3'. Cleavage occurs on the 3'-side of the TT dinucleotide at the point of strand exchange. HJ branch migration catalyzed by RuvA-RuvB allows RuvC to scan DNA until it finds its consensus sequence, where it cleaves and resolves the cruciform DNA. This Pelobacter propionicus (strain DSM 2379 / NBRC 103807 / OttBd1) protein is Crossover junction endodeoxyribonuclease RuvC.